The chain runs to 70 residues: MMFRLTSVSCFLLFIVFLNLVVLTNACIPEGTYCQFNADCCLSQCCWGSCGNPCRFPGKREKLQEFFRQR.

Positions 1–26 (MMFRLTSVSCFLLFIVFLNLVVLTNA) are cleaved as a signal peptide. Intrachain disulfides connect C27-C41, C34-C46, C40-C50, and C45-C54. At P57 the chain carries Proline amide. Positions 61–70 (EKLQEFFRQR) are excised as a propeptide.

Belongs to the conotoxin I2 superfamily. As to expression, expressed by the venom duct.

It localises to the secreted. The chain is Conotoxin Lt11.2 from Conus litteratus (Lettered cone).